The following is a 438-amino-acid chain: MFLPQEFIRRKRDGQPLDRDGMAAFVRGVTDGSVTEGQVAAFAMAVYFNDLSTDERVALTLAQRDSGDVLDWRALDLDGPVIDKHSTGGVGDVVSLMLGPMVAACGGYVPMISGRGLGHTGGTLDKLSAIPGYDVMPATDAFRRTVREVGVAIIGQTARLAPADKRIYAIRDVTATVESVAMITASILSKKLAAGLDGLVMDVKVGSGAFMPTAEKSAELARSIVDVGNGAGMKTTAILTDMNQSLAPCAGNALEVACAIDYLTGKSRPARLHDVTMALSAELLVTGGLARDVGHAREKLQQALDSGAAAERFARMVVALGGPADLLDAPARHLARAVVIVPVPAPASGVVQRVDCRALGLAVVALGGGRTRAEDAIDVSVGLSALAEIGQRVEAGEPLGFVHARDEATAAHAADAIRRGYVLGDTGEAPPTLYQRVD.

This sequence belongs to the thymidine/pyrimidine-nucleoside phosphorylase family. As to quaternary structure, homodimer.

It carries out the reaction thymidine + phosphate = 2-deoxy-alpha-D-ribose 1-phosphate + thymine. It participates in pyrimidine metabolism; dTMP biosynthesis via salvage pathway; dTMP from thymine: step 1/2. Its function is as follows. The enzymes which catalyze the reversible phosphorolysis of pyrimidine nucleosides are involved in the degradation of these compounds and in their utilization as carbon and energy sources, or in the rescue of pyrimidine bases for nucleotide synthesis. This is Thymidine phosphorylase from Burkholderia cenocepacia (strain ATCC BAA-245 / DSM 16553 / LMG 16656 / NCTC 13227 / J2315 / CF5610) (Burkholderia cepacia (strain J2315)).